A 346-amino-acid polypeptide reads, in one-letter code: Phosphoribosylformylglycinamidine cyclo-ligase (346 aa).

It belongs to the AIR synthase family.

The protein localises to the cytoplasm. The enzyme catalyses 2-formamido-N(1)-(5-O-phospho-beta-D-ribosyl)acetamidine + ATP = 5-amino-1-(5-phospho-beta-D-ribosyl)imidazole + ADP + phosphate + H(+). It functions in the pathway purine metabolism; IMP biosynthesis via de novo pathway; 5-amino-1-(5-phospho-D-ribosyl)imidazole from N(2)-formyl-N(1)-(5-phospho-D-ribosyl)glycinamide: step 2/2. This is Phosphoribosylformylglycinamidine cyclo-ligase from Shewanella halifaxensis (strain HAW-EB4).